The following is a 163-amino-acid chain: Xanthine-guanine phosphoribosyltransferase (163 aa).

Residues 43–44 (RG) and 95–103 (DDLVDTGGT) contribute to the 5-phospho-alpha-D-ribose 1-diphosphate site. Aspartate 96 lines the Mg(2+) pocket. Aspartate 99 and isoleucine 142 together coordinate guanine. Xanthine contacts are provided by aspartate 99 and isoleucine 142. Residues 99-103 (DTGGT) and 141-142 (WI) each bind GMP.

This sequence belongs to the purine/pyrimidine phosphoribosyltransferase family. XGPT subfamily. As to quaternary structure, homotetramer. Mg(2+) serves as cofactor.

It localises to the cell inner membrane. The catalysed reaction is GMP + diphosphate = guanine + 5-phospho-alpha-D-ribose 1-diphosphate. It catalyses the reaction XMP + diphosphate = xanthine + 5-phospho-alpha-D-ribose 1-diphosphate. The enzyme catalyses IMP + diphosphate = hypoxanthine + 5-phospho-alpha-D-ribose 1-diphosphate. It functions in the pathway purine metabolism; GMP biosynthesis via salvage pathway; GMP from guanine: step 1/1. Its pathway is purine metabolism; XMP biosynthesis via salvage pathway; XMP from xanthine: step 1/1. Purine salvage pathway enzyme that catalyzes the transfer of the ribosyl-5-phosphate group from 5-phospho-alpha-D-ribose 1-diphosphate (PRPP) to the N9 position of the 6-oxopurines guanine and xanthine to form the corresponding ribonucleotides GMP (guanosine 5'-monophosphate) and XMP (xanthosine 5'-monophosphate), with the release of PPi. To a lesser extent, also acts on hypoxanthine. This Nitratidesulfovibrio vulgaris (strain DP4) (Desulfovibrio vulgaris) protein is Xanthine-guanine phosphoribosyltransferase.